The following is a 185-amino-acid chain: Ribosome-recycling factor (185 aa).

The protein belongs to the RRF family.

The protein localises to the cytoplasm. In terms of biological role, responsible for the release of ribosomes from messenger RNA at the termination of protein biosynthesis. May increase the efficiency of translation by recycling ribosomes from one round of translation to another. This chain is Ribosome-recycling factor, found in Campylobacter jejuni subsp. jejuni serotype O:2 (strain ATCC 700819 / NCTC 11168).